The primary structure comprises 286 residues: uncharacterized protein (286 aa).

A signal peptide spans 1 to 19 (MISKEYISLLSALLTKGYS).

This is an uncharacterized protein from Acidianus filamentous virus 2 (isolate Italy/Pozzuoli) (AFV-2).